The chain runs to 158 residues: NAD(P)H-quinone oxidoreductase subunit J, chloroplastic (158 aa).

This sequence belongs to the complex I 30 kDa subunit family. In terms of assembly, NDH is composed of at least 16 different subunits, 5 of which are encoded in the nucleus.

It is found in the plastid. The protein resides in the chloroplast thylakoid membrane. The enzyme catalyses a plastoquinone + NADH + (n+1) H(+)(in) = a plastoquinol + NAD(+) + n H(+)(out). It carries out the reaction a plastoquinone + NADPH + (n+1) H(+)(in) = a plastoquinol + NADP(+) + n H(+)(out). In terms of biological role, NDH shuttles electrons from NAD(P)H:plastoquinone, via FMN and iron-sulfur (Fe-S) centers, to quinones in the photosynthetic chain and possibly in a chloroplast respiratory chain. The immediate electron acceptor for the enzyme in this species is believed to be plastoquinone. Couples the redox reaction to proton translocation, and thus conserves the redox energy in a proton gradient. The protein is NAD(P)H-quinone oxidoreductase subunit J, chloroplastic of Solanum bulbocastanum (Wild potato).